The following is a 179-amino-acid chain: Inner membrane-spanning protein YciB (179 aa).

A run of 5 helical transmembrane segments spans residues 22-42, 50-70, 76-96, 121-141, and 149-169; these read IYAA…YSWV, MALI…FFHN, WKVT…QWVM, LAWA…AFWL, and FKVF…GIYI.

It belongs to the YciB family.

It localises to the cell inner membrane. Functionally, plays a role in cell envelope biogenesis, maintenance of cell envelope integrity and membrane homeostasis. This Escherichia coli O127:H6 (strain E2348/69 / EPEC) protein is Inner membrane-spanning protein YciB.